Here is a 334-residue protein sequence, read N- to C-terminus: Ribosomal RNA small subunit methyltransferase H (334 aa).

Residues 54–56, Asp74, Phe100, Asp121, and Gln128 contribute to the S-adenosyl-L-methionine site; that span reads GGH. The tract at residues 272-318 is disordered; the sequence is RHSKGQYPEDENLPMPPKRPRYFSKPKRVGPSKAEISNNPRSRSAWL. Basic residues predominate over residues 289–301; sequence KRPRYFSKPKRVG.

This sequence belongs to the methyltransferase superfamily. RsmH family.

The protein resides in the cytoplasm. The catalysed reaction is cytidine(1402) in 16S rRNA + S-adenosyl-L-methionine = N(4)-methylcytidine(1402) in 16S rRNA + S-adenosyl-L-homocysteine + H(+). Its function is as follows. Specifically methylates the N4 position of cytidine in position 1402 (C1402) of 16S rRNA. The sequence is that of Ribosomal RNA small subunit methyltransferase H from Psychrobacter arcticus (strain DSM 17307 / VKM B-2377 / 273-4).